Here is a 561-residue protein sequence, read N- to C-terminus: Septation ring formation regulator EzrA (561 aa).

Residues methionine 1 to isoleucine 3 lie on the Extracellular side of the membrane. Residues valine 4–arginine 22 traverse the membrane as a helical segment. The Cytoplasmic segment spans residues arginine 23–glycine 561. Coiled coils occupy residues arginine 98–leucine 130, alanine 166–lysine 214, and phenylalanine 251–aspartate 465.

It belongs to the EzrA family.

It localises to the cell membrane. In terms of biological role, negative regulator of FtsZ ring formation; modulates the frequency and position of FtsZ ring formation. Inhibits FtsZ ring formation at polar sites. Interacts either with FtsZ or with one of its binding partners to promote depolymerization. The polypeptide is Septation ring formation regulator EzrA (Halalkalibacterium halodurans (strain ATCC BAA-125 / DSM 18197 / FERM 7344 / JCM 9153 / C-125) (Bacillus halodurans)).